The following is a 159-amino-acid chain: Ribosomal RNA large subunit methyltransferase H (159 aa).

Residues Leu76, Gly108, and 127–132 (FGLLTL) each bind S-adenosyl-L-methionine.

This sequence belongs to the RNA methyltransferase RlmH family. As to quaternary structure, homodimer.

It localises to the cytoplasm. The enzyme catalyses pseudouridine(1915) in 23S rRNA + S-adenosyl-L-methionine = N(3)-methylpseudouridine(1915) in 23S rRNA + S-adenosyl-L-homocysteine + H(+). Functionally, specifically methylates the pseudouridine at position 1915 (m3Psi1915) in 23S rRNA. The chain is Ribosomal RNA large subunit methyltransferase H from Streptococcus equi subsp. zooepidemicus (strain MGCS10565).